We begin with the raw amino-acid sequence, 1201 residues long: DNA-directed RNA polymerase subunit beta (1201 aa).

Positions 1165–1201 (DALSKFKQQQDEKAADKAAKADAAKPSETTNAQQDNQ) are disordered. Residues 1172-1189 (QQQDEKAADKAAKADAAK) are compositionally biased toward basic and acidic residues. A compositionally biased stretch (polar residues) spans 1191-1201 (SETTNAQQDNQ).

Belongs to the RNA polymerase beta chain family. As to quaternary structure, the RNAP catalytic core consists of 2 alpha, 1 beta, 1 beta' and 1 omega subunit. When a sigma factor is associated with the core the holoenzyme is formed, which can initiate transcription.

The catalysed reaction is RNA(n) + a ribonucleoside 5'-triphosphate = RNA(n+1) + diphosphate. Its function is as follows. DNA-dependent RNA polymerase catalyzes the transcription of DNA into RNA using the four ribonucleoside triphosphates as substrates. In Lactiplantibacillus plantarum (strain ATCC BAA-793 / NCIMB 8826 / WCFS1) (Lactobacillus plantarum), this protein is DNA-directed RNA polymerase subunit beta.